The chain runs to 81 residues: Toxin F-VIII (81 aa).

A signal peptide spans 1-21; the sequence is MKTLLLTLLVVTIVCLDLAST. Cystine bridges form between C24/C43, C38/C60, C62/C73, and C74/C79.

Belongs to the three-finger toxin family. Short-chain subfamily. Orphan group XI sub-subfamily. As to expression, expressed by the venom gland.

Its subcellular location is the secreted. Is cytotoxic against A549 cells (LC(50)=106 ug/ml). The protein is Toxin F-VIII of Dendroaspis angusticeps (Eastern green mamba).